The primary structure comprises 204 residues: Cytochrome c biogenesis ATP-binding export protein CcmA (204 aa).

Positions 2 to 204 (IEVRDLGVSR…LDAEDLGGFL (203 aa)) constitute an ABC transporter domain. An ATP-binding site is contributed by 34–41 (GPNGIGKT).

This sequence belongs to the ABC transporter superfamily. CcmA exporter (TC 3.A.1.107) family. As to quaternary structure, the complex is composed of two ATP-binding proteins (CcmA) and two transmembrane proteins (CcmB).

Its subcellular location is the cell inner membrane. The catalysed reaction is heme b(in) + ATP + H2O = heme b(out) + ADP + phosphate + H(+). Part of the ABC transporter complex CcmAB involved in the biogenesis of c-type cytochromes; once thought to export heme, this seems not to be the case, but its exact role is uncertain. Responsible for energy coupling to the transport system. This chain is Cytochrome c biogenesis ATP-binding export protein CcmA, found in Ruegeria sp. (strain TM1040) (Silicibacter sp.).